Reading from the N-terminus, the 146-residue chain is Large ribosomal subunit protein uL24z (146 aa).

Disordered regions lie at residues 1-26 and 121-146; these read MKYNPRVTSSRRKNRKAHFTASSSER and KAKGRAAADKEKGTKFTSEDVMQNVD. The span at 9 to 18 shows a compositional bias: basic residues; the sequence is SSRRKNRKAH. A compositionally biased stretch (basic and acidic residues) spans 121 to 138; that stretch reads KAKGRAAADKEKGTKFTS.

It belongs to the universal ribosomal protein uL24 family.

This Arabidopsis thaliana (Mouse-ear cress) protein is Large ribosomal subunit protein uL24z (RPL26A).